The sequence spans 174 residues: Gamma-crystallin D (174 aa).

Beta/gamma crystallin 'Greek key' domains are found at residues 2-40 (GKIT…RVDS) and 41-83 (GCWM…RIIP). The interval 84–87 (YSGS) is connecting peptide. 2 consecutive Beta/gamma crystallin 'Greek key' domains span residues 88 to 128 (HKMR…NVLD) and 129 to 171 (GCWI…RRVI).

Belongs to the beta/gamma-crystallin family. Monomer.

In terms of biological role, crystallins are the dominant structural components of the vertebrate eye lens. The protein is Gamma-crystallin D (CRYGD) of Macropus fuliginosus (Western gray kangaroo).